The primary structure comprises 225 residues: Uracil-DNA glycosylase (225 aa).

Aspartate 65 (proton acceptor) is an active-site residue.

It belongs to the uracil-DNA glycosylase (UDG) superfamily. UNG family.

The protein localises to the cytoplasm. It catalyses the reaction Hydrolyzes single-stranded DNA or mismatched double-stranded DNA and polynucleotides, releasing free uracil.. In terms of biological role, excises uracil residues from the DNA which can arise as a result of misincorporation of dUMP residues by DNA polymerase or due to deamination of cytosine. This chain is Uracil-DNA glycosylase, found in Bacillus cereus (strain AH820).